The sequence spans 408 residues: CinA-like protein (408 aa).

Belongs to the CinA family.

In Anaeromyxobacter dehalogenans (strain 2CP-C), this protein is CinA-like protein.